Consider the following 1236-residue polypeptide: DNA topoisomerase 2 (1236 aa).

Residues Asn-65, Asn-96, 124-126 (SSN), 137-144 (GRHGYGAK), and 354-356 (QSK) each bind ATP. In terms of domain architecture, Toprim spans 434-548 (RTLIITEGDS…KLLQNNPGYI (115 aa)). Mg(2+)-binding residues include Glu-440, Asp-517, and Asp-519. The 417-residue stretch at 685-1101 (IPHCVDGLKP…TPVKMWLTEL (417 aa)) folds into the Topo IIA-type catalytic domain. Residue Tyr-775 is the O-(5'-phospho-DNA)-tyrosine intermediate of the active site. The tract at residues 956 to 965 (ALAQRIYING) is interaction with DNA. A disordered region spans residues 1161–1211 (YEKPPPSKRRPGESVGGARPSDSAARTVGKRLVGSRSEFKNKKPMSRKNNV).

The protein belongs to the type II topoisomerase family. In terms of assembly, homodimer. Mg(2+) serves as cofactor. It depends on Mn(2+) as a cofactor. Requires Ca(2+) as cofactor.

It localises to the nucleus. It carries out the reaction ATP-dependent breakage, passage and rejoining of double-stranded DNA.. Functionally, control of topological states of DNA by transient breakage and subsequent rejoining of DNA strands. Topoisomerase II makes double-strand breaks. In Leishmania chagasi, this protein is DNA topoisomerase 2 (TOP2).